Here is an 835-residue protein sequence, read N- to C-terminus: Lon protease (835 aa).

The 199-residue stretch at 36 to 234 folds into the Lon N-terminal domain; the sequence is VHVFPLLRRP…KALILLKKEL (199 aa). 387 to 394 is an ATP binding site; that stretch reads GPPGVGKT. The Lon proteolytic domain occupies 646 to 828; it reads RTPVGVCMGL…DQVFKISFPN (183 aa). Residues Ser734 and Lys777 contribute to the active site.

Belongs to the peptidase S16 family. Homohexamer. Organized in a ring with a central cavity.

The protein resides in the cytoplasm. It carries out the reaction Hydrolysis of proteins in presence of ATP.. ATP-dependent serine protease that mediates the selective degradation of mutant and abnormal proteins as well as certain short-lived regulatory proteins. Required for cellular homeostasis and for survival from DNA damage and developmental changes induced by stress. Degrades polypeptides processively to yield small peptide fragments that are 5 to 10 amino acids long. Binds to DNA in a double-stranded, site-specific manner. This is Lon protease from Protochlamydia amoebophila (strain UWE25).